The following is a 297-amino-acid chain: Phosphoribosylaminoimidazole-succinocarboxamide synthase (297 aa).

This sequence belongs to the SAICAR synthetase family.

The catalysed reaction is 5-amino-1-(5-phospho-D-ribosyl)imidazole-4-carboxylate + L-aspartate + ATP = (2S)-2-[5-amino-1-(5-phospho-beta-D-ribosyl)imidazole-4-carboxamido]succinate + ADP + phosphate + 2 H(+). The protein operates within purine metabolism; IMP biosynthesis via de novo pathway; 5-amino-1-(5-phospho-D-ribosyl)imidazole-4-carboxamide from 5-amino-1-(5-phospho-D-ribosyl)imidazole-4-carboxylate: step 1/2. This Mycobacterium marinum (strain ATCC BAA-535 / M) protein is Phosphoribosylaminoimidazole-succinocarboxamide synthase.